Consider the following 253-residue polypeptide: Tryptophan synthase alpha chain (253 aa).

Active-site proton acceptor residues include E45 and D56.

This sequence belongs to the TrpA family. Tetramer of two alpha and two beta chains.

It carries out the reaction (1S,2R)-1-C-(indol-3-yl)glycerol 3-phosphate + L-serine = D-glyceraldehyde 3-phosphate + L-tryptophan + H2O. The protein operates within amino-acid biosynthesis; L-tryptophan biosynthesis; L-tryptophan from chorismate: step 5/5. Its function is as follows. The alpha subunit is responsible for the aldol cleavage of indoleglycerol phosphate to indole and glyceraldehyde 3-phosphate. This Flavobacterium psychrophilum (strain ATCC 49511 / DSM 21280 / CIP 103535 / JIP02/86) protein is Tryptophan synthase alpha chain.